Consider the following 139-residue polypeptide: uncharacterized protein (139 aa).

The next 2 membrane-spanning stretches (helical) occupy residues leucine 35–isoleucine 55 and phenylalanine 57–isoleucine 77.

The protein localises to the membrane. This is an uncharacterized protein from Saccharomyces cerevisiae (strain ATCC 204508 / S288c) (Baker's yeast).